We begin with the raw amino-acid sequence, 577 residues long: Beta-fructofuranosidase, insoluble isoenzyme 1 (577 aa).

Positions 1–22 are cleaved as a signal peptide; that stretch reads MGTRLLALAPWLLLLLLQLAGA. The active site involves Asp63. 3 N-linked (GlcNAc...) asparagine glycosylation sites follow: Asn158, Asn183, and Asn333.

It belongs to the glycosyl hydrolase 32 family.

The protein localises to the secreted. It is found in the extracellular space. It localises to the apoplast. Its subcellular location is the cell wall. It catalyses the reaction Hydrolysis of terminal non-reducing beta-D-fructofuranoside residues in beta-D-fructofuranosides.. Its function is as follows. May play a role in sucrose partitioning during seed development and in stress response. This chain is Beta-fructofuranosidase, insoluble isoenzyme 1 (CIN1), found in Oryza sativa subsp. indica (Rice).